The chain runs to 274 residues: Basic leucine zipper transcriptional factor ATF-like 2 (274 aa).

Disordered regions lie at residues 1–47 (MHLC…ALHQ), 128–151 (GSCYPAQPLSPGPQPHDSPSLLQC), and 187–229 (GSSS…PSSA). Residues 17–80 (EQQRQLKKQK…AWWSRTLHVH (64 aa)) form the bZIP domain. The tract at residues 20-41 (RQLKKQKNRAAAQRSRQKHTDK) is basic motif. Residues 37 to 47 (KHTDKADALHQ) are compositionally biased toward basic and acidic residues. The tract at residues 45–66 (LHQQHESLEKDNLALRKEIQSL) is leucine-zipper. Residues 187 to 196 (GSSSKLSALQ) are compositionally biased toward low complexity.

The protein belongs to the bZIP family. Heterodimer; heterodimerizes with JUN family proteins.

The protein resides in the nucleus. Functionally, AP-1 family transcription factor that controls the differentiation of lineage-specific cells in the immune system. Following infection, participates in the differentiation of CD8(+) thymic conventional dendritic cells in the immune system. Acts via the formation of a heterodimer with JUN family proteins that recognizes and binds DNA sequence 5'-TGA[CG]TCA-3' and regulates expression of target genes. Selectively suppresses CCN1 transcription and hence blocks the downstream cell proliferation signals produced by CCN1 and inhibits CCN1-induced anchorage-independent growth and invasion in several cancer types, such as breast cancer, malignant glioma and metastatic melanoma. Possibly acts by interfering with AP-1 binding to CCN1 promoter. This is Basic leucine zipper transcriptional factor ATF-like 2 (BATF2) from Homo sapiens (Human).